Here is a 357-residue protein sequence, read N- to C-terminus: Putative minor fimbrial subunit PmfE (357 aa).

The signal sequence occupies residues 1–28 (MILNKKNIHSKSVMLFCAGIVSLMPLHA).

Its subcellular location is the fimbrium. The chain is Putative minor fimbrial subunit PmfE (pmfE) from Proteus mirabilis (strain HI4320).